Here is a 323-residue protein sequence, read N- to C-terminus: Methenyltetrahydromethanopterin cyclohydrolase (323 aa).

The protein belongs to the MCH family.

The protein resides in the cytoplasm. The catalysed reaction is 5,10-methenyl-5,6,7,8-tetrahydromethanopterin + H2O = N(5)-formyl-5,6,7,8-tetrahydromethanopterin + H(+). The protein operates within one-carbon metabolism; methanogenesis from CO(2); 5,10-methenyl-5,6,7,8-tetrahydromethanopterin from CO(2): step 3/3. Catalyzes the reversible interconversion of 5-formyl-H(4)MPT to methenyl-H(4)MPT(+). The polypeptide is Methenyltetrahydromethanopterin cyclohydrolase (Methanococcus maripaludis (strain C7 / ATCC BAA-1331)).